The following is a 258-amino-acid chain: UPF0246 protein YaaA (258 aa).

The protein belongs to the UPF0246 family.

The polypeptide is UPF0246 protein YaaA (Escherichia coli (strain SMS-3-5 / SECEC)).